A 116-amino-acid chain; its full sequence is U16-barytoxin-Tl1f (116 aa).

The first 20 residues, 1–20 (MKTIIVFLSLLVLATKFGDA), serve as a signal peptide directing secretion. Positions 21 to 74 (NEGVNQEQMKEVIQNEFREDFLNEMAAMSLLQQLEAIESTLLEKEADRNSRQKR) are excised as a propeptide. 3 disulfides stabilise this stretch: Cys75-Cys90, Cys82-Cys95, and Cys89-Cys110. N-linked (GlcNAc...) asparagine glycosylation occurs at Asn85.

It belongs to the neurotoxin 14 (magi-1) family. 06 (ICK-Trit) subfamily. As to expression, expressed by the venom gland.

It is found in the secreted. Its function is as follows. Ion channel inhibitor. In Trittame loki (Brush-footed trapdoor spider), this protein is U16-barytoxin-Tl1f.